The following is a 277-amino-acid chain: NH(3)-dependent NAD(+) synthetase (277 aa).

36–43 (GLSGGIDS) provides a ligand contact to ATP. Aspartate 42 provides a ligand contact to Mg(2+). Residue arginine 118 coordinates deamido-NAD(+). ATP is bound at residue threonine 138. Residue glutamate 143 participates in Mg(2+) binding. Residues lysine 167 and serine 189 each coordinate ATP.

It belongs to the NAD synthetase family. In terms of assembly, homodimer.

The enzyme catalyses deamido-NAD(+) + NH4(+) + ATP = AMP + diphosphate + NAD(+) + H(+). The protein operates within cofactor biosynthesis; NAD(+) biosynthesis; NAD(+) from deamido-NAD(+) (ammonia route): step 1/1. In terms of biological role, catalyzes the ATP-dependent amidation of deamido-NAD to form NAD. Uses ammonia as a nitrogen source. In Pelodictyon phaeoclathratiforme (strain DSM 5477 / BU-1), this protein is NH(3)-dependent NAD(+) synthetase.